The chain runs to 196 residues: ATP-dependent Clp protease proteolytic subunit (196 aa).

Catalysis depends on Ser96, which acts as the Nucleophile. Residue His121 is part of the active site.

It belongs to the peptidase S14 family. Fourteen ClpP subunits assemble into 2 heptameric rings which stack back to back to give a disk-like structure with a central cavity, resembling the structure of eukaryotic proteasomes.

It is found in the cytoplasm. It catalyses the reaction Hydrolysis of proteins to small peptides in the presence of ATP and magnesium. alpha-casein is the usual test substrate. In the absence of ATP, only oligopeptides shorter than five residues are hydrolyzed (such as succinyl-Leu-Tyr-|-NHMec, and Leu-Tyr-Leu-|-Tyr-Trp, in which cleavage of the -Tyr-|-Leu- and -Tyr-|-Trp bonds also occurs).. Functionally, cleaves peptides in various proteins in a process that requires ATP hydrolysis. Has a chymotrypsin-like activity. Plays a major role in the degradation of misfolded proteins. This Streptococcus uberis (strain ATCC BAA-854 / 0140J) protein is ATP-dependent Clp protease proteolytic subunit.